The primary structure comprises 177 residues: Large ribosomal subunit protein uL10 (177 aa).

This sequence belongs to the universal ribosomal protein uL10 family. Part of the ribosomal stalk of the 50S ribosomal subunit. The N-terminus interacts with L11 and the large rRNA to form the base of the stalk. The C-terminus forms an elongated spine to which L12 dimers bind in a sequential fashion forming a multimeric L10(L12)X complex.

Functionally, forms part of the ribosomal stalk, playing a central role in the interaction of the ribosome with GTP-bound translation factors. The sequence is that of Large ribosomal subunit protein uL10 from Kocuria rhizophila (strain ATCC 9341 / DSM 348 / NBRC 103217 / DC2201).